The sequence spans 83 residues: Cell division topological specificity factor (83 aa).

Belongs to the MinE family.

Prevents the cell division inhibition by proteins MinC and MinD at internal division sites while permitting inhibition at polar sites. This ensures cell division at the proper site by restricting the formation of a division septum at the midpoint of the long axis of the cell. This Pseudoalteromonas atlantica (strain T6c / ATCC BAA-1087) protein is Cell division topological specificity factor.